Here is a 541-residue protein sequence, read N- to C-terminus: Chaperonin GroEL (541 aa).

ATP contacts are provided by residues 29-32 (TAGP), lysine 50, 86-90 (DGTTT), glycine 416, and aspartate 498.

This sequence belongs to the chaperonin (HSP60) family. Forms a cylinder of 14 subunits composed of two heptameric rings stacked back-to-back. Interacts with the co-chaperonin GroES.

It localises to the cytoplasm. It carries out the reaction ATP + H2O + a folded polypeptide = ADP + phosphate + an unfolded polypeptide.. Functionally, together with its co-chaperonin GroES, plays an essential role in assisting protein folding. The GroEL-GroES system forms a nano-cage that allows encapsulation of the non-native substrate proteins and provides a physical environment optimized to promote and accelerate protein folding. This chain is Chaperonin GroEL, found in Anaplasma phagocytophilum (Ehrlichia phagocytophila).